The sequence spans 127 residues: Glycine cleavage system H protein 1 (127 aa).

The Lipoyl-binding domain occupies 20 to 101; the sequence is LLTVGITAYA…LGEAWFFRFR (82 aa). Position 60 is an N6-lipoyllysine (Lys60).

The protein belongs to the GcvH family. In terms of assembly, the glycine cleavage system is composed of four proteins: P, T, L and H. The cofactor is (R)-lipoate.

The glycine cleavage system catalyzes the degradation of glycine. The H protein shuttles the methylamine group of glycine from the P protein to the T protein. The polypeptide is Glycine cleavage system H protein 1 (Pseudomonas aeruginosa (strain ATCC 15692 / DSM 22644 / CIP 104116 / JCM 14847 / LMG 12228 / 1C / PRS 101 / PAO1)).